We begin with the raw amino-acid sequence, 594 residues long: Glutamate decarboxylase 1 (594 aa).

The span at 1 to 13 shows a compositional bias: low complexity; the sequence is MASSTPSSSATSS. The interval 1 to 23 is disordered; that stretch reads MASSTPSSSATSSNAGADPNTTN. Residue serine 78 is modified to Phosphoserine. Residue 190 to 192 coordinates 4-aminobutanoate; it reads QLS. At lysine 405 the chain carries N6-(pyridoxal phosphate)lysine. Residue arginine 567 coordinates 4-aminobutanoate.

It belongs to the group II decarboxylase family. Homodimer. Requires pyridoxal 5'-phosphate as cofactor.

The enzyme catalyses L-glutamate + H(+) = 4-aminobutanoate + CO2. In terms of biological role, catalyzes the synthesis of the inhibitory neurotransmitter gamma-aminobutyric acid (GABA) with pyridoxal 5'-phosphate as cofactor. The sequence is that of Glutamate decarboxylase 1 (GAD1) from Pan troglodytes (Chimpanzee).